The following is a 438-amino-acid chain: Aspartate--tRNA(Asp/Asn) ligase (438 aa).

L-aspartate is bound at residue Glu-176. Residues 198 to 201 are aspartate; sequence QLYK. L-aspartate is bound at residue Arg-220. ATP is bound by residues 220-222, 228-230, and Glu-361; these read RAE and RHL. 2 residues coordinate Mg(2+): Glu-361 and Ser-364. L-aspartate-binding residues include Ser-364 and Arg-368. 409–412 is an ATP binding site; the sequence is GIER.

The protein belongs to the class-II aminoacyl-tRNA synthetase family. Type 2 subfamily. In terms of assembly, homodimer. It depends on Mg(2+) as a cofactor.

It is found in the cytoplasm. The enzyme catalyses tRNA(Asx) + L-aspartate + ATP = L-aspartyl-tRNA(Asx) + AMP + diphosphate. Its function is as follows. Aspartyl-tRNA synthetase with relaxed tRNA specificity since it is able to aspartylate not only its cognate tRNA(Asp) but also tRNA(Asn). Reaction proceeds in two steps: L-aspartate is first activated by ATP to form Asp-AMP and then transferred to the acceptor end of tRNA(Asp/Asn). The chain is Aspartate--tRNA(Asp/Asn) ligase from Methanococcus aeolicus (strain ATCC BAA-1280 / DSM 17508 / OCM 812 / Nankai-3).